A 1102-amino-acid chain; its full sequence is MLIRWKSKDKSSSSTSSSSSTSKKKRKGRESEDDWQNDKSNRNQPTDQAIDDRRRSARSREDPRRHTLGGDMLQWHKECPHALTIARLSYFHSPFCLYPLLPQQTPQMRVYTPTNQGPLFDDDPGIMSEAETASTGFRRGGKQRSSLPVVRTPSKTLERPLGLVFLQYRSETKRALLPNEITSIDTVRALFVRSFPRQLTMQYLEGPNVKIYIHDSSKDMFYELEDVRSHLREIRDRSVLRLFESNEVSAPQVLPGGQNIPQPLQPAAIPNQWDQEQSYFSEPEFDSEYQHQHIHKSKQPTKTPYYVGTTQTLPRGMYSDRTKGAIDGYMSSPERSGASRGAYEEPYYSQYGTRSATVTPIIDEEQGDISIADDQYAMYGVKNVGRIPRVPPNQMYDHTRSEDLHRIRVEHMERQLANLTGLVQKALTQNPQLPLVNNSPNILNIPGQYRNAEATGDGTVCTREKPPKLGKSTCHKSVSFEKSVSFSDDIQGVPKSHSPQHSADTKPPKPAIKSSTLPRTSSQERDRLKPPPPPKPLVMIAGNQYRTDLTLAPEVYNQLRGLQKKAMDLRTEVRTLRRLTQTQAVAVREDIKDTFMRIRATLLSNSGFVWGQGDKERTNLTREEEIYKQEVIRLEKDLADLESSVEGLRGEVINRRTRVNMVAVEDMALVLSRASKTVAELKMRFPVLQQGLRNLISNEMEHVCREEAFLKDEPDRLENALRRCKKLTGTLVTLKRLASVQEQRLPIPDTAGTDETIKPPETHNNVNKPIPSPRLGTVVASGGIAPENALDALLDXXXXXXXXAALHHADAHRPDDSTSDDSSQTLQNSITTKISQSQLYPSEPVSSNVGLRRLHSYPSGSDTDTSPPQPTRPTTGKPPVPERNAELLSKVNNKRVPPPPPPRTSSRSPLASPTSPHVPQHHRGQQQQQPAVTLSDCEQQQRTSEGTDSGSESVCSDNSQRQLALELRHQELLKKQRQLQEQYQRLQQMSKNAVPLAPTTMNHDIKKTGSESNLPLKMGYNMTVSGSMKNLCGGSGDPTLPFDPSQGSVANNVDHQDGGGSDSSTGGPNSLDGVAIGANGSVGTLPPHLTKTTNKVYETDIL.

A compositionally biased stretch (basic and acidic residues) spans 1–11; sequence MLIRWKSKDKS. Disordered regions lie at residues 1-69 and 295-318; these read MLIR…HTLG and HKSK…RGMY. Residues 12-21 are compositionally biased toward low complexity; it reads SSSTSSSSST. The segment covering 50-65 has biased composition (basic and acidic residues); sequence IDDRRRSARSREDPRR. Residues 405–430 are a coiled coil; it reads HRIRVEHMERQLANLTGLVQKALTQN. 2 disordered regions span residues 450–475 and 489–539; these read RNAE…STCH and DIQG…PLVM. Coiled coils occupy residues 554–579 and 614–654; these read EVYN…LRRL and DKER…EVIN. Disordered stretches follow at residues 745 to 774, 832 to 958, and 1031 to 1087; these read LPIP…PSPR, TKIS…CSDN, and LCGG…TLPP. Polar residues predominate over residues 832-849; it reads TKISQSQLYPSEPVSSNV. The span at 867–881 shows a compositional bias: pro residues; sequence PPQPTRPTTGKPPVP. Residues 904 to 918 are compositionally biased toward low complexity; sequence TSSRSPLASPTSPHV. Residues 936–958 show a composition bias toward polar residues; sequence DCEQQQRTSEGTDSGSESVCSDN.

The chain is Coiled-coil domain-containing protein AGAP005037 from Anopheles gambiae (African malaria mosquito).